Reading from the N-terminus, the 695-residue chain is Protein-glutamine gamma-glutamyltransferase 2 (695 aa).

Catalysis depends on residues C272, H332, and D355. Residues N395, D397, E434, E444, and E449 each coordinate Ca(2+). GTP-binding positions include 476–482 and 578–581; these read SIKHAQP and ANIP.

Belongs to the transglutaminase superfamily. Transglutaminase family. In terms of assembly, monomer. Ca(2+) serves as cofactor.

It localises to the cytoplasm. It is found in the cytosol. The protein resides in the nucleus. Its subcellular location is the chromosome. The protein localises to the secreted. It localises to the extracellular space. It is found in the extracellular matrix. The protein resides in the cell membrane. Its subcellular location is the mitochondrion. The enzyme catalyses L-glutaminyl-[protein] + L-lysyl-[protein] = [protein]-L-lysyl-N(6)-5-L-glutamyl-[protein] + NH4(+). It catalyses the reaction L-glutaminyl-[protein] + serotonin = 5-serotonyl-L-glutamyl-[protein] + NH4(+). The catalysed reaction is L-glutaminyl-[protein] + dopamine = 5-dopaminyl-L-glutamyl-[protein] + NH4(+). It carries out the reaction L-glutaminyl-[protein] + histamine = 5-histaminyl-L-glutamyl-[protein] + NH4(+). The enzyme catalyses L-glutaminyl-[protein] + (R)-noradrenaline = 5-(R)-noradrenalinyl-L-glutamyl-[protein] + NH4(+). It catalyses the reaction L-glutaminyl-[protein] + H2O = L-glutamyl-[protein] + NH4(+). With respect to regulation, acyltransferase activity is regulated by the binding of GTP and Ca(2+): inactivated by GTP, which stabilizes its closed structure, thereby obstructing the accessibility of substrates to the active sites. In contrast, Ca(2+) acts as a cofactor by inducing conformational change to the active open form. In absence of Ca(2+), Mg(2+) may bind Ca(2+)-binding sites, promoting GTP-binding and subsequent inhibition of the acyltransferase activity. Its function is as follows. Calcium-dependent acyltransferase that catalyzes the formation of covalent bonds between peptide-bound glutamine and various primary amines, such as gamma-amino group of peptide-bound lysine, or mono- and polyamines, thereby producing cross-linked or aminated proteins, respectively. Involved in many biological processes, such as bone development, angiogenesis, wound healing, cellular differentiation, chromatin modification and apoptosis. Acts as a protein-glutamine gamma-glutamyltransferase by mediating the cross-linking of proteins: under physiological conditions, the protein cross-linking activity is inhibited by GTP; inhibition is relieved by Ca(2+) in response to various stresses. When secreted, catalyzes cross-linking of proteins of the extracellular matrix, resulting in the formation of scaffolds. Plays a key role during apoptosis, both by (1) promoting the cross-linking of cytoskeletal proteins resulting in condensation of the cytoplasm, and by (2) mediating cross-linking proteins of the extracellular matrix, resulting in the irreversible formation of scaffolds that stabilize the integrity of the dying cells before their clearance by phagocytosis, thereby preventing the leakage of harmful intracellular components. In addition to protein cross-linking, can use different monoamine substrates to catalyze a vast array of protein post-translational modifications: mediates aminylation of serotonin, dopamine, noradrenaline or histamine into glutamine residues of target proteins to generate protein serotonylation, dopaminylation, noradrenalinylation or histaminylation, respectively. Mediates protein serotonylation of small GTPases during activation and aggregation of platelets, leading to constitutive activation of these GTPases. Plays a key role in chromatin organization by mediating serotonylation and dopaminylation of histone H3. Catalyzes serotonylation of 'Gln-5' of histone H3 (H3Q5ser) during serotonergic neuron differentiation, thereby facilitating transcription. Acts as a mediator of neurotransmission-independent role of nuclear dopamine in ventral tegmental area (VTA) neurons: catalyzes dopaminylation of 'Gln-5' of histone H3 (H3Q5dop), thereby regulating relapse-related transcriptional plasticity in the reward system. Also acts as a protein deamidase by mediating the side chain deamidation of specific glutamine residues of proteins to glutamate. May also act as an isopeptidase cleaving the previously formed cross-links. Also able to participate in signaling pathways independently of its acyltransferase activity: acts as a signal transducer in alpha-1 adrenergic receptor-mediated stimulation of phospholipase C-delta (PLCD) activity and is required for coupling alpha-1 adrenergic agonists to the stimulation of phosphoinositide lipid metabolism. This chain is Protein-glutamine gamma-glutamyltransferase 2, found in Pagrus major (Red sea bream).